The primary structure comprises 309 residues: Serpentine receptor class gamma-47 (309 aa).

The next 5 membrane-spanning stretches (helical) occupy residues 22–42 (IVQM…LFLF), 140–160 (FKLY…VLPL), 190–210 (IYSS…IFYI), 230–250 (LITL…ILMA), and 272–292 (ISSD…DVGI).

The protein belongs to the nematode receptor-like protein srg family.

The protein resides in the membrane. This Caenorhabditis elegans protein is Serpentine receptor class gamma-47 (srg-47).